The primary structure comprises 387 residues: Succinyl-diaminopimelate desuccinylase (387 aa).

Residue histidine 74 participates in Zn(2+) binding. Aspartate 76 is a catalytic residue. Aspartate 107 is a Zn(2+) binding site. The active-site Proton acceptor is the glutamate 142. Residues glutamate 143, glutamate 171, and histidine 360 each contribute to the Zn(2+) site.

The protein belongs to the peptidase M20A family. DapE subfamily. In terms of assembly, homodimer. It depends on Zn(2+) as a cofactor. The cofactor is Co(2+).

It catalyses the reaction N-succinyl-(2S,6S)-2,6-diaminopimelate + H2O = (2S,6S)-2,6-diaminopimelate + succinate. The protein operates within amino-acid biosynthesis; L-lysine biosynthesis via DAP pathway; LL-2,6-diaminopimelate from (S)-tetrahydrodipicolinate (succinylase route): step 3/3. Functionally, catalyzes the hydrolysis of N-succinyl-L,L-diaminopimelic acid (SDAP), forming succinate and LL-2,6-diaminopimelate (DAP), an intermediate involved in the bacterial biosynthesis of lysine and meso-diaminopimelic acid, an essential component of bacterial cell walls. This is Succinyl-diaminopimelate desuccinylase from Rhodopseudomonas palustris (strain ATCC BAA-98 / CGA009).